A 647-amino-acid polypeptide reads, in one-letter code: Spindle pole body-associated protein VIK1 (647 aa).

The span at 36 to 51 (NTTNTMNGSRPSSMKS) shows a compositional bias: polar residues. The disordered stretch occupies residues 36–55 (NTTNTMNGSRPSSMKSSLAL). A coiled-coil region spans residues 202 to 350 (DHEITEEISQ…SKQEKFYNDT (149 aa)).

Interacts with KAR3; the interaction is direct.

The protein resides in the cytoplasm. The protein localises to the cytoskeleton. Its subcellular location is the microtubule organizing center. It localises to the spindle pole body. It is found in the nucleus. Its function is as follows. Together with the minus end-directed microtubule motor KAR3, plays a role in microtubule organization. Recruits KAR3 to microtubules, and together they may stabilize the polymers. The KAR3-VIK1 heterodimer cross-links anti-parallel microtubules. Targets and/or maintains KAR3 at the spindle pole body during vegetative growth. The polypeptide is Spindle pole body-associated protein VIK1 (VIK1) (Saccharomyces cerevisiae (strain ATCC 204508 / S288c) (Baker's yeast)).